A 137-amino-acid polypeptide reads, in one-letter code: Integration host factor subunit beta (137 aa).

Basic and acidic residues predominate over residues 75 to 92; it reads KRVPHFKAGKELRERVDR. Residues 75–137 form a disordered region; sequence KRVPHFKAGK…EGGGLNLARS (63 aa). Gly residues predominate over residues 128–137; sequence EGGGLNLARS.

The protein belongs to the bacterial histone-like protein family. As to quaternary structure, heterodimer of an alpha and a beta chain.

This protein is one of the two subunits of integration host factor, a specific DNA-binding protein that functions in genetic recombination as well as in transcriptional and translational control. In Cupriavidus pinatubonensis (strain JMP 134 / LMG 1197) (Cupriavidus necator (strain JMP 134)), this protein is Integration host factor subunit beta.